A 491-amino-acid polypeptide reads, in one-letter code: Ketol-acid reductoisomerase (NADP(+)) (491 aa).

The region spanning 15–208 (AQLGKCRFMG…GGHRAGVLES (194 aa)) is the KARI N-terminal Rossmann domain. NADP(+) contacts are provided by residues 45 to 48 (CGAQ), R68, R76, S78, and 108 to 110 (DKQ). H132 is a catalytic residue. NADP(+) is bound at residue G158. 2 consecutive KARI C-terminal knotted domains span residues 209-344 (SFVA…TAPQ) and 345-484 (FEGK…MTDM). Mg(2+) contacts are provided by D217, E221, E389, and E393. S414 is a binding site for substrate.

It belongs to the ketol-acid reductoisomerase family. The cofactor is Mg(2+).

It carries out the reaction (2R)-2,3-dihydroxy-3-methylbutanoate + NADP(+) = (2S)-2-acetolactate + NADPH + H(+). The catalysed reaction is (2R,3R)-2,3-dihydroxy-3-methylpentanoate + NADP(+) = (S)-2-ethyl-2-hydroxy-3-oxobutanoate + NADPH + H(+). Its pathway is amino-acid biosynthesis; L-isoleucine biosynthesis; L-isoleucine from 2-oxobutanoate: step 2/4. It functions in the pathway amino-acid biosynthesis; L-valine biosynthesis; L-valine from pyruvate: step 2/4. Its function is as follows. Involved in the biosynthesis of branched-chain amino acids (BCAA). Catalyzes an alkyl-migration followed by a ketol-acid reduction of (S)-2-acetolactate (S2AL) to yield (R)-2,3-dihydroxy-isovalerate. In the isomerase reaction, S2AL is rearranged via a Mg-dependent methyl migration to produce 3-hydroxy-3-methyl-2-ketobutyrate (HMKB). In the reductase reaction, this 2-ketoacid undergoes a metal-dependent reduction by NADPH to yield (R)-2,3-dihydroxy-isovalerate. The chain is Ketol-acid reductoisomerase (NADP(+)) from Salmonella schwarzengrund (strain CVM19633).